A 520-amino-acid chain; its full sequence is 2-isopropylmalate synthase (520 aa).

Residues 5 to 268 (VYIFDTTLRD…YTDVNTKEIY (264 aa)) enclose the Pyruvate carboxyltransferase domain. Asp14, His202, His204, and Asn238 together coordinate Mn(2+). The segment at 394-520 (KVLHFQVQSG…RQEIREEGTV (127 aa)) is regulatory domain.

The protein belongs to the alpha-IPM synthase/homocitrate synthase family. LeuA type 1 subfamily. As to quaternary structure, homodimer. The cofactor is Mn(2+).

It is found in the cytoplasm. It carries out the reaction 3-methyl-2-oxobutanoate + acetyl-CoA + H2O = (2S)-2-isopropylmalate + CoA + H(+). It functions in the pathway amino-acid biosynthesis; L-leucine biosynthesis; L-leucine from 3-methyl-2-oxobutanoate: step 1/4. Catalyzes the condensation of the acetyl group of acetyl-CoA with 3-methyl-2-oxobutanoate (2-ketoisovalerate) to form 3-carboxy-3-hydroxy-4-methylpentanoate (2-isopropylmalate). The chain is 2-isopropylmalate synthase from Aquifex aeolicus (strain VF5).